We begin with the raw amino-acid sequence, 500 residues long: Cytochrome P450 71B36 (500 aa).

Residues 1–21 traverse the membrane as a helical segment; the sequence is MATILFLSLLFLSCILLAAFT. Cys440 is a heme binding site.

The protein belongs to the cytochrome P450 family. Requires heme as cofactor.

It localises to the membrane. In Arabidopsis thaliana (Mouse-ear cress), this protein is Cytochrome P450 71B36 (CYP71B36).